The following is a 491-amino-acid chain: GTPase Der (491 aa).

EngA-type G domains are found at residues 3–166 (PVVA…AEAM) and 200–373 (IKLA…DSAT). Residues 9 to 16 (GRPNVGKS), 56 to 60 (DTGGI), 118 to 121 (NKVD), 206 to 213 (GKPNVGKS), 253 to 257 (DTAGV), and 318 to 321 (NKWD) each bind GTP. The region spanning 374–458 (RRVSTSMLTR…PIQIRFQEGD (85 aa)) is the KH-like domain. Positions 472-491 (QERRRKRALSHINDRKTKGE) are disordered.

Belongs to the TRAFAC class TrmE-Era-EngA-EngB-Septin-like GTPase superfamily. EngA (Der) GTPase family. Associates with the 50S ribosomal subunit.

In terms of biological role, GTPase that plays an essential role in the late steps of ribosome biogenesis. The chain is GTPase Der from Shewanella denitrificans (strain OS217 / ATCC BAA-1090 / DSM 15013).